A 227-amino-acid chain; its full sequence is Protein FdhD (227 aa).

F210–K215 provides a ligand contact to Mo-bis(molybdopterin guanine dinucleotide).

This sequence belongs to the FdhD family.

It localises to the cytoplasm. Functionally, required for formate dehydrogenase (FDH) activity. The protein is Protein FdhD of Methanocaldococcus jannaschii (strain ATCC 43067 / DSM 2661 / JAL-1 / JCM 10045 / NBRC 100440) (Methanococcus jannaschii).